The chain runs to 410 residues: Peptide chain release factor subunit 1 (410 aa).

The protein belongs to the eukaryotic release factor 1 family. Heterodimer of two subunits, one of which binds GTP.

It localises to the cytoplasm. In terms of biological role, directs the termination of nascent peptide synthesis (translation) in response to the termination codons UAA, UAG and UGA. The sequence is that of Peptide chain release factor subunit 1 from Picrophilus torridus (strain ATCC 700027 / DSM 9790 / JCM 10055 / NBRC 100828 / KAW 2/3).